Reading from the N-terminus, the 513-residue chain is Cytochrome P450 4d10 (513 aa).

2 residues coordinate heme: glutamate 317 and cysteine 457.

The protein belongs to the cytochrome P450 family. Heme serves as cofactor.

It is found in the endoplasmic reticulum membrane. The protein localises to the microsome membrane. Functionally, may play an important role in the maintenance of specific insect-host plant relationships. May be involved in xenobiotic metabolism. The protein is Cytochrome P450 4d10 (Cyp4d10) of Drosophila mettleri (Fruit fly).